We begin with the raw amino-acid sequence, 348 residues long: ECA polysaccharide chain length modulation protein (348 aa).

The next 2 membrane-spanning stretches (helical) occupy residues 31-51 and 323-343; these read FWII…TFFA and AFLM…VALT.

It belongs to the WzzB/Cld/Rol family. As to quaternary structure, probably part of a complex composed of WzxE, WzyE and WzzE.

It is found in the cell inner membrane. Its pathway is bacterial outer membrane biogenesis; enterobacterial common antigen biosynthesis. Modulates the polysaccharide chain length of enterobacterial common antigen (ECA). The chain is ECA polysaccharide chain length modulation protein from Salmonella typhimurium (strain LT2 / SGSC1412 / ATCC 700720).